Here is a 61-residue protein sequence, read N- to C-terminus: MPIVTVKFLEGRSDEQKRALVERVTEAVAETIQANPEKIHVVLEEMRKDHYGVAGKRISDQ.

Proline 2 acts as the Proton acceptor; via imino nitrogen in catalysis.

It belongs to the 4-oxalocrotonate tautomerase family.

This Halalkalibacterium halodurans (strain ATCC BAA-125 / DSM 18197 / FERM 7344 / JCM 9153 / C-125) (Bacillus halodurans) protein is Probable tautomerase BH3814.